We begin with the raw amino-acid sequence, 1069 residues long: Carbamoyl phosphate synthase large chain (1069 aa).

Residues 1-401 (MPLNKDIKRV…AFLKGIRSLE (401 aa)) are carboxyphosphate synthetic domain. ATP contacts are provided by Arg129, Arg169, Gly175, Gly176, Lys208, Val210, Glu215, Gly241, Ile242, His243, Gln284, and Glu298. Residues 133–327 (RDMMNRIGEP…IAKLAAKIAL (195 aa)) enclose the ATP-grasp 1 domain. Residues Gln284, Glu298, and Asn300 each contribute to the Mg(2+) site. Gln284, Glu298, and Asn300 together coordinate Mn(2+). Residues 402 to 549 (IGKYSLDHKK…YSTYEQYDEV (148 aa)) form an oligomerization domain region. Positions 550 to 932 (EVSNRRKVIV…ALYKGFVGAN (383 aa)) are carbamoyl phosphate synthetic domain. An ATP-grasp 2 domain is found at 674–864 (DELLERLDIS…IVDIATQVML (191 aa)). ATP is bound by residues Arg710, Lys749, Leu751, Glu755, Gly780, Val781, His782, Ser783, Gln823, and Glu835. Mg(2+)-binding residues include Gln823, Glu835, and Asn837. Residues Gln823, Glu835, and Asn837 each contribute to the Mn(2+) site. Residues 932–1069 (NMYPSKEKGK…KDLEVFDITK (138 aa)) enclose the MGS-like domain. The segment at 933–1069 (MYPSKEKGKI…KDLEVFDITK (137 aa)) is allosteric domain.

This sequence belongs to the CarB family. Composed of two chains; the small (or glutamine) chain promotes the hydrolysis of glutamine to ammonia, which is used by the large (or ammonia) chain to synthesize carbamoyl phosphate. Tetramer of heterodimers (alpha,beta)4. The cofactor is Mg(2+). Requires Mn(2+) as cofactor.

It carries out the reaction hydrogencarbonate + L-glutamine + 2 ATP + H2O = carbamoyl phosphate + L-glutamate + 2 ADP + phosphate + 2 H(+). It catalyses the reaction hydrogencarbonate + NH4(+) + 2 ATP = carbamoyl phosphate + 2 ADP + phosphate + 2 H(+). It participates in amino-acid biosynthesis; L-arginine biosynthesis; carbamoyl phosphate from bicarbonate: step 1/1. It functions in the pathway pyrimidine metabolism; UMP biosynthesis via de novo pathway; (S)-dihydroorotate from bicarbonate: step 1/3. Large subunit of the glutamine-dependent carbamoyl phosphate synthetase (CPSase). CPSase catalyzes the formation of carbamoyl phosphate from the ammonia moiety of glutamine, carbonate, and phosphate donated by ATP, constituting the first step of 2 biosynthetic pathways, one leading to arginine and/or urea and the other to pyrimidine nucleotides. The large subunit (synthetase) binds the substrates ammonia (free or transferred from glutamine from the small subunit), hydrogencarbonate and ATP and carries out an ATP-coupled ligase reaction, activating hydrogencarbonate by forming carboxy phosphate which reacts with ammonia to form carbamoyl phosphate. In Clostridium botulinum (strain Alaska E43 / Type E3), this protein is Carbamoyl phosphate synthase large chain.